We begin with the raw amino-acid sequence, 562 residues long: NAD-dependent malic enzyme 1 (562 aa).

Tyr-101 functions as the Proton donor in the catalytic mechanism. Arg-154 contacts NAD(+). Lys-172 acts as the Proton acceptor in catalysis. 3 residues coordinate a divalent metal cation: Glu-243, Asp-244, and Asp-267. NAD(+)-binding residues include Asp-267 and Asn-415.

Belongs to the malic enzymes family. Homotetramer. Requires Mg(2+) as cofactor. Mn(2+) is required as a cofactor.

The enzyme catalyses (S)-malate + NAD(+) = pyruvate + CO2 + NADH. The catalysed reaction is oxaloacetate + H(+) = pyruvate + CO2. This Vibrio vulnificus (strain YJ016) protein is NAD-dependent malic enzyme 1.